The sequence spans 174 residues: Ribosome maturation factor RimM (174 aa).

The region spanning 97 to 171 is the PRC barrel domain; it reads SDGEYYWCDL…RMTVSLPEGL (75 aa).

The protein belongs to the RimM family. As to quaternary structure, binds ribosomal protein uS19.

Its subcellular location is the cytoplasm. In terms of biological role, an accessory protein needed during the final step in the assembly of 30S ribosomal subunit, possibly for assembly of the head region. Essential for efficient processing of 16S rRNA. May be needed both before and after RbfA during the maturation of 16S rRNA. It has affinity for free ribosomal 30S subunits but not for 70S ribosomes. This Geotalea daltonii (strain DSM 22248 / JCM 15807 / FRC-32) (Geobacter daltonii) protein is Ribosome maturation factor RimM.